The primary structure comprises 522 residues: Putative thymidine phosphorylase (522 aa).

It belongs to the thymidine/pyrimidine-nucleoside phosphorylase family. Type 2 subfamily.

The enzyme catalyses thymidine + phosphate = 2-deoxy-alpha-D-ribose 1-phosphate + thymine. The polypeptide is Putative thymidine phosphorylase (Albidiferax ferrireducens (strain ATCC BAA-621 / DSM 15236 / T118) (Rhodoferax ferrireducens)).